The sequence spans 147 residues: Submaxillary gland androgen-regulated protein 3A (147 aa).

Positions 1 to 22 are cleaved as a signal peptide; the sequence is MKPLNLVLGLCILVGCFLSCEC. The tract at residues 27 to 128 is disordered; it reads RRHDPRGPFP…ISITTPTARD (102 aa). Pro residues predominate over residues 33 to 105; sequence GPFPPPPPPH…PTPSIPPTGP (73 aa). A run of 3 repeats spans residues 43-54, 55-66, and 67-78. Residues 43-78 form a 3 X 12 AA tandem repeats of G-P-G-I-G-R-P-[HP]-P-P-P-[PF] region; it reads GPGIGRPHPPPFGPGIGRPPPPPFGPGIGRPPPPPP. Residues 108–127 show a composition bias toward polar residues; it reads TVQATTMPAASISITTPTAR.

This sequence belongs to the PROL1/PROL3 family. Secreted into saliva by submaxillary gland.

The protein localises to the secreted. May play a role in protection or detoxification. This chain is Submaxillary gland androgen-regulated protein 3A (Smr3a), found in Mus musculus (Mouse).